A 252-amino-acid polypeptide reads, in one-letter code: uncharacterized protein (252 aa).

Phosphoserine is present on residues Ser195 and Ser209.

Testis-specific. Highly expressed in spermatocytes (at protein level).

In terms of biological role, essential for normal spermatogenesis and male fertility. This is an uncharacterized protein from Mus musculus (Mouse).